Reading from the N-terminus, the 358-residue chain is Photosystem II protein D1 (358 aa).

3 consecutive transmembrane segments (helical) span residues 28 to 45, 117 to 132, and 141 to 155; these read YVGW…AAAI, HFLI…QWEL, and WICV…AAFA. Residue H117 participates in chlorophyll a binding. W125 is a binding site for pheophytin a. D169 and E188 together coordinate [CaMn4O5] cluster. Residues 196–217 form a helical membrane-spanning segment; that stretch reads FHMIGVAGMFGGSLFSAMHGSL. H197 serves as a coordination point for chlorophyll a. A quinone-binding positions include H214 and 263-264; that span reads SF. H214 provides a ligand contact to Fe cation. Position 271 (H271) interacts with Fe cation. The helical transmembrane segment at 273–287 threads the bilayer; that stretch reads FLAAWPVICIWITSL. Positions 331, 332, 341, and 343 each coordinate [CaMn4O5] cluster. Residues 344 to 358 constitute a propeptide that is removed on maturation; it reads AAESTPVALIAPAIG.

This sequence belongs to the reaction center PufL/M/PsbA/D family. PSII is composed of 1 copy each of membrane proteins PsbA, PsbB, PsbC, PsbD, PsbE, PsbF, PsbH, PsbI, PsbJ, PsbK, PsbL, PsbM, PsbT, PsbX, PsbY, Psb30/Ycf12, peripheral proteins PsbO, CyanoQ (PsbQ), PsbU, PsbV and a large number of cofactors. It forms dimeric complexes. Requires The D1/D2 heterodimer binds P680, chlorophylls that are the primary electron donor of PSII, and subsequent electron acceptors. It shares a non-heme iron and each subunit binds pheophytin, quinone, additional chlorophylls, carotenoids and lipids. D1 provides most of the ligands for the Mn4-Ca-O5 cluster of the oxygen-evolving complex (OEC). There is also a Cl(-1) ion associated with D1 and D2, which is required for oxygen evolution. The PSII complex binds additional chlorophylls, carotenoids and specific lipids. as cofactor. Post-translationally, tyr-160 forms a radical intermediate that is referred to as redox-active TyrZ, YZ or Y-Z. C-terminally processed by CtpA; processing is essential to allow assembly of the oxygen-evolving complex and thus photosynthetic growth.

The protein resides in the cellular thylakoid membrane. The catalysed reaction is 2 a plastoquinone + 4 hnu + 2 H2O = 2 a plastoquinol + O2. Its function is as follows. Photosystem II (PSII) is a light-driven water:plastoquinone oxidoreductase that uses light energy to abstract electrons from H(2)O, generating O(2) and a proton gradient subsequently used for ATP formation. It consists of a core antenna complex that captures photons, and an electron transfer chain that converts photonic excitation into a charge separation. The D1/D2 (PsbA/PsbD) reaction center heterodimer binds P680, the primary electron donor of PSII as well as several subsequent electron acceptors. In Prochlorococcus marinus (strain MIT 9303), this protein is Photosystem II protein D1.